The following is a 101-amino-acid chain: Cyanovirin-N (101 aa).

Disulfide bonds link Cys8/Cys22 and Cys58/Cys73.

It belongs to the cyanovirin-N family. In terms of assembly, in solution exists as a metastable domain-swapped homodimer which very slowly converts into a more stable monomeric form at room temperature. Under physiological conditions it is unlikely that the dimeric species exists and indeed the monomer is more active against HIV. Interacts with HIV-1 gp120. Post-translationally, cleavage, or reduction and alkylation of the disulfide bonds results in the loss of anti-HIV activity.

Mannose-binding lectin. This is Cyanovirin-N from Nostoc ellipsosporum.